The primary structure comprises 194 residues: Naphthalene 1,2-dioxygenase system, small oxygenase component (194 aa).

It belongs to the bacterial ring-hydroxylating dioxygenase beta subunit family. The naphthalene dioxygenase (NDO) multicomponent enzyme system is composed of an electron transfer component and a dioxygenase component (iron sulfur protein (ISP)). The electron transfer component is composed of a ferredoxin reductase (NagAa) and a ferredoxin (NagAb), and the dioxygenase component is formed by a large alpha subunit (NagAc) and a small beta subunit (NagAd).

It functions in the pathway aromatic compound metabolism; naphthalene degradation. Its function is as follows. Component of the naphthalene dioxygenase (NDO) multicomponent enzyme system which catalyzes the incorporation of both atoms of molecular oxygen into naphthalene to form cis-(1R,2S)-dihydroxy-1,2-dihydronaphthalene. Also able to use styrene as substrate. The beta subunit seems to have a structural role in the holoenzyme. The polypeptide is Naphthalene 1,2-dioxygenase system, small oxygenase component (Ralstonia sp).